A 184-amino-acid polypeptide reads, in one-letter code: Photosystem I assembly protein Ycf4 (184 aa).

A run of 2 helical transmembrane segments spans residues F22–S42 and I57–S77.

Belongs to the Ycf4 family.

It is found in the plastid. Its subcellular location is the chloroplast thylakoid membrane. Functionally, seems to be required for the assembly of the photosystem I complex. This chain is Photosystem I assembly protein Ycf4, found in Gossypium barbadense (Sea Island cotton).